The following is an 82-amino-acid chain: RNA-binding protein Hfq (82 aa).

The 61-residue stretch at 11-71 folds into the Sm domain; sequence DTFLNHVRKT…ISTIMPGAPI (61 aa).

The protein belongs to the Hfq family. As to quaternary structure, homohexamer.

Functionally, RNA chaperone that binds small regulatory RNA (sRNAs) and mRNAs to facilitate mRNA translational regulation in response to envelope stress, environmental stress and changes in metabolite concentrations. Also binds with high specificity to tRNAs. This chain is RNA-binding protein Hfq, found in Bradyrhizobium sp. (strain BTAi1 / ATCC BAA-1182).